We begin with the raw amino-acid sequence, 352 residues long: UPF0324 membrane protein BCE_5279 (352 aa).

10 helical membrane passes run 25-47 (FGFS…LAEL), 52-71 (IMGQ…AAIG), 111-130 (VLVI…YGLT), 140-162 (GILT…APQV), 169-191 (TAVG…TLLY), 201-223 (YGVF…APGG), 230-252 (AVIV…GLWF), 267-289 (LPIP…GIIP), 291-313 (VVAG…GLGL), and 328-350 (FVAG…YALG).

This sequence belongs to the UPF0324 family.

It localises to the cell membrane. The sequence is that of UPF0324 membrane protein BCE_5279 from Bacillus cereus (strain ATCC 10987 / NRS 248).